The following is a 508-amino-acid chain: Photosystem II CP47 reaction center protein (508 aa).

Transmembrane regions (helical) follow at residues 21 to 36 (SVHIMHTALVAGWAGS), 101 to 115 (IVFSGLCFLAAIWHW), 140 to 156 (GIHLFLSGVACFGFGAF), 203 to 218 (IAAGTLGILAGLFHLS), 237 to 252 (VLSSSIAAVFFAAFVV), and 457 to 472 (SFALLFFFGHIWHGSR).

The protein belongs to the PsbB/PsbC family. PsbB subfamily. As to quaternary structure, PSII is composed of 1 copy each of membrane proteins PsbA, PsbB, PsbC, PsbD, PsbE, PsbF, PsbH, PsbI, PsbJ, PsbK, PsbL, PsbM, PsbT, PsbX, PsbY, PsbZ, Psb30/Ycf12, at least 3 peripheral proteins of the oxygen-evolving complex and a large number of cofactors. It forms dimeric complexes. The cofactor is Binds multiple chlorophylls. PSII binds additional chlorophylls, carotenoids and specific lipids..

It is found in the plastid. The protein resides in the chloroplast thylakoid membrane. Its function is as follows. One of the components of the core complex of photosystem II (PSII). It binds chlorophyll and helps catalyze the primary light-induced photochemical processes of PSII. PSII is a light-driven water:plastoquinone oxidoreductase, using light energy to abstract electrons from H(2)O, generating O(2) and a proton gradient subsequently used for ATP formation. The chain is Photosystem II CP47 reaction center protein from Fagopyrum esculentum subsp. ancestrale (Wild buckwheat).